The following is a 323-amino-acid chain: Sphingomyelinase D (323 aa).

An N-terminal signal peptide occupies residues Met-1–Gly-20. His-59 is an active-site residue. Mg(2+) contacts are provided by Glu-79, Asp-81, and Asp-127. Residues Ala-308–Trp-315 carry the SMD-tail motif.

The protein belongs to the sphingomyelinase D/phospholipase D family. Mg(2+) serves as cofactor.

The protein localises to the secreted. It catalyses the reaction a sphingomyelin + H2O = an N-acylsphing-4-enine 1-phosphate + choline + H(+). In terms of biological role, catalyzes the hydrolysis of sphingomyelin. Sphingomyelinases D are produced by some spider in their venoms, but also by arthropods such as ticks, or pathogenic bacteria and fungi. They might play a role in pathogenicity through different mechanisms, such as membrane destabilization and host cell penetration, but also pulmonary inflammation and cutaneous lesions. This Trichophyton rubrum (strain ATCC MYA-4607 / CBS 118892) (Athlete's foot fungus) protein is Sphingomyelinase D.